Here is a 114-residue protein sequence, read N- to C-terminus: uncharacterized protein (114 aa).

Residues 18–29 (TRKRNSHKKVTK) are compositionally biased toward basic residues. 2 disordered regions span residues 18–47 (TRKR…RRTG) and 65–108 (SRPR…KLLN). Basic and acidic residues predominate over residues 30–41 (RAVEKRKQDSTR).

This is an uncharacterized protein from Homo sapiens (Human).